A 274-amino-acid chain; its full sequence is CTO1 family protein C17G9.12c (274 aa).

Belongs to the CTO1 family.

It is found in the cytoplasm. Its subcellular location is the nucleus. This Schizosaccharomyces pombe (strain 972 / ATCC 24843) (Fission yeast) protein is CTO1 family protein C17G9.12c.